A 116-amino-acid chain; its full sequence is UPF0654 protein C869.09 (116 aa).

Residues Leu-32–Lys-116 form a disordered region. Residues Ser-39–Gly-48 show a composition bias toward polar residues. Residues Gln-49–Phe-64 show a composition bias toward basic and acidic residues.

The protein belongs to the UPF0654 (con-6) family.

Its subcellular location is the cytoplasm. The protein localises to the nucleus. In Schizosaccharomyces pombe (strain 972 / ATCC 24843) (Fission yeast), this protein is UPF0654 protein C869.09.